The primary structure comprises 228 residues: Sliding clamp (228 aa).

Belongs to the Tevenvirinae sliding clamp family. Homotrimer. Interacts with the viral DNA polymerase; this interaction constitutes the polymerase holoenzyme. Interacts with the sliding-clamp-loader; this interaction allows the sliding-clamp-loader to open the sliding clamp. Interacts with the viral DNA ligase. Part of the replicase complex that includes the DNA polymerase, the polymerase clamp, the clamp loader complex, the single-stranded DNA binding protein, the primase, the helicase and the helicase assembly factor. Interacts with the viral RNA polymerase (RNAP). Part of the transcription activation complex containing host RNAP, the viral RNA polymerase sigma-like factor, the late transcription coactivator, and the sliding clamp.

Functionally, sliding clamp that encircles the genomic DNA and links the DNA polymerase to the template to control the processivity of DNA synthesis. Responsible for tethering the catalytic subunit of DNA polymerase to DNA during high-speed replication. Interaction with the sliding-clamp-loader opens the sliding clamp so that it can be loaded around the DNA template. During transcription, encircles the DNA and tethers host RNA polymerase (RNAP) to it. The sequence is that of Sliding clamp (45) from Escherichia coli (Bacteriophage RB69).